Reading from the N-terminus, the 606-residue chain is Phosphoenolpyruvate carboxykinase [GTP] (606 aa).

Residues Arg79 and 218-220 each bind substrate; that span reads YGG. Mn(2+)-binding residues include Lys227 and His247. Ser269 is a binding site for substrate. 270 to 275 contributes to the GTP binding site; the sequence is ACGKTN. Cys271 is a catalytic residue. Position 294 (Asp294) interacts with Mn(2+). 384–386 contacts substrate; the sequence is NSR. GTP contacts are provided by residues Arg386, Arg417, and 512–515; that span reads FGEN.

The protein belongs to the phosphoenolpyruvate carboxykinase [GTP] family. Monomer. The cofactor is Mn(2+).

The protein resides in the cytoplasm. The catalysed reaction is oxaloacetate + GTP = phosphoenolpyruvate + GDP + CO2. It functions in the pathway carbohydrate biosynthesis; gluconeogenesis. Functionally, catalyzes the conversion of oxaloacetate (OAA) to phosphoenolpyruvate (PEP), the rate-limiting step in the metabolic pathway that produces glucose from lactate and other precursors derived from the citric acid cycle. The sequence is that of Phosphoenolpyruvate carboxykinase [GTP] from Corynebacterium jeikeium (strain K411).